The sequence spans 97 residues: Coiled-coil domain-containing protein 167 (97 aa).

Residues 10-79 (GVALEIDGLE…LRQENRKNML (70 aa)) are a coiled coil. A helical transmembrane segment spans residues 78–95 (MLLSVAIFILLTLVYAYW).

Its subcellular location is the membrane. The polypeptide is Coiled-coil domain-containing protein 167 (CCDC167) (Homo sapiens (Human)).